Reading from the N-terminus, the 428-residue chain is Serine--tRNA ligase (428 aa).

236–238 (TAE) contacts L-serine. Residue 267 to 269 (RSE) participates in ATP binding. Glu-290 serves as a coordination point for L-serine. 354-357 (EISS) is an ATP binding site. Ser-388 provides a ligand contact to L-serine.

The protein belongs to the class-II aminoacyl-tRNA synthetase family. Type-1 seryl-tRNA synthetase subfamily. Homodimer. The tRNA molecule binds across the dimer.

It localises to the cytoplasm. It carries out the reaction tRNA(Ser) + L-serine + ATP = L-seryl-tRNA(Ser) + AMP + diphosphate + H(+). It catalyses the reaction tRNA(Sec) + L-serine + ATP = L-seryl-tRNA(Sec) + AMP + diphosphate + H(+). The protein operates within aminoacyl-tRNA biosynthesis; selenocysteinyl-tRNA(Sec) biosynthesis; L-seryl-tRNA(Sec) from L-serine and tRNA(Sec): step 1/1. Catalyzes the attachment of serine to tRNA(Ser). Is also able to aminoacylate tRNA(Sec) with serine, to form the misacylated tRNA L-seryl-tRNA(Sec), which will be further converted into selenocysteinyl-tRNA(Sec). The chain is Serine--tRNA ligase from Psychrobacter cryohalolentis (strain ATCC BAA-1226 / DSM 17306 / VKM B-2378 / K5).